A 465-amino-acid chain; its full sequence is Cysteine--tRNA ligase (465 aa).

C27 is a binding site for Zn(2+). Positions P29–H39 match the 'HIGH' region motif. Zn(2+) is bound by residues C207, H237, and E241. The 'KMSKS' region signature appears at K269–S273. K272 provides a ligand contact to ATP.

The protein belongs to the class-I aminoacyl-tRNA synthetase family. As to quaternary structure, monomer. Zn(2+) serves as cofactor.

The protein resides in the cytoplasm. It carries out the reaction tRNA(Cys) + L-cysteine + ATP = L-cysteinyl-tRNA(Cys) + AMP + diphosphate. The protein is Cysteine--tRNA ligase of Helicobacter pylori (strain G27).